A 38-amino-acid chain; its full sequence is Lebetin-2-alpha (38 aa).

Residues 1 to 38 are disordered; it reads GDNKPPKKGPPNGCFGHKIDRIGSHSGLGCNKVDDNKG. An intrachain disulfide couples cysteine 14 to cysteine 30.

Belongs to the natriuretic peptide family. Expressed by the venom gland.

The protein localises to the secreted. Inhibits platelet aggregation induced by thrombin, collagen and PAF-acether. Human platelet aggregation induced by thrombin is inhibited by synthetic lebetin-1-alpha with (IC(50)=140 nM). In vivo, inhibits collagen-induced thrombocytopenia in rats. Is not toxic upon intravenous injection into mice and rats. Its function is as follows. Inhibits platelet aggregation induced by thrombin, collagen and PAF-acether. Human platelet aggregation induced by thrombin is inhibited by synthetic lebetin-1-beta with (IC(50)=32 nM). In vivo, inhibits collagen-induced thrombocytopenia in rats. Is not toxic upon intravenous injection into mice and rats. Functionally, inhibits platelet aggregation induced by thrombin, collagen and PAF-acether. Human platelet aggregation induced by thrombin is inhibited by synthetic lebetin-1-gamma with (IC(50)=5 nM). In vivo, inhibits collagen-induced thrombocytopenia in rats. Is not toxic upon intravenous injection into mice and rats. In terms of biological role, inhibits platelet aggregation induced by thrombin, collagen and PAF-acether. Human platelet aggregation induced by thrombin is inhibited by synthetic lebetin-1-alpha with (IC(50)=2.5 nM). In vivo, inhibits collagen-induced thrombocytopenia in rats. Is not toxic upon intravenous injection into mice and rats. Inhibits platelet aggregation induced by thrombin, collagen and PAF-acether. Human platelet aggregation induced by thrombin is inhibited by synthetic lebetin-1-alpha with (IC(50)=2.8 nM). In vivo, inhibits collagen-induced thrombocytopenia in rats. Is not toxic upon intravenous injection into mice and rats. The protein is Lebetin-2-alpha of Macrovipera lebetinus (Levantine viper).